A 395-amino-acid polypeptide reads, in one-letter code: MESKTSTYLRARFREYYLTASMDAPPGMEAREWGFIFYDTPGMRRHRSFRSRKELVDYIRSTVPAHVYHSAAYYLKPDAPTMKEKIWKGADLIFDLDADHLAEYRGSGIRDFREMLERVKGETMKLLEFLLSDFGFDERMISVAFSGGRGYHIHVRDKSVLKLRSDARREIVDYLTGRGLDPERFIHKIGVDGDAGVERARSLRGPASDAPGWGGRINKAIESMVMHLRELDDEEALRLLKNVKGIGKQKARLFLSQIREENAIKSIRAGNLDFFKHASGIWNLIIPYIMEETVRALGGETDEPVTADVHRLIRFPESLHGGTGLRVTSLSINSLHAFDPLKDAVVFGDDPVHVEIIRPTTLELMGERFDLLEGKTELPEYAAVFLLARGFAEVG.

Catalysis depends on residues aspartate 95, aspartate 97, and aspartate 302.

It belongs to the eukaryotic-type primase small subunit family. As to quaternary structure, heterodimer of a small subunit (PriS) and a large subunit (PriL). Mg(2+) is required as a cofactor. Mn(2+) serves as cofactor.

Functionally, catalytic subunit of DNA primase, an RNA polymerase that catalyzes the synthesis of short RNA molecules used as primers for DNA polymerase during DNA replication. The small subunit contains the primase catalytic core and has DNA synthesis activity on its own. Binding to the large subunit stabilizes and modulates the activity, increasing the rate of DNA synthesis while decreasing the length of the DNA fragments, and conferring RNA synthesis capability. The DNA polymerase activity may enable DNA primase to also catalyze primer extension after primer synthesis. May also play a role in DNA repair. The sequence is that of DNA primase small subunit PriS from Methanothrix thermoacetophila (strain DSM 6194 / JCM 14653 / NBRC 101360 / PT) (Methanosaeta thermophila).